The following is a 171-amino-acid chain: Translationally-controlled tumor protein homolog (171 aa).

The region spanning 1–171 (MIIYKDIITG…FKDGLEIEKC (171 aa)) is the TCTP domain.

It belongs to the TCTP family.

It localises to the cytoplasm. Its function is as follows. Involved in calcium binding and microtubule stabilization. This chain is Translationally-controlled tumor protein homolog (tpt1), found in Danio rerio (Zebrafish).